We begin with the raw amino-acid sequence, 328 residues long: DNA polymerase III subunit delta' (328 aa).

As to quaternary structure, DNA polymerase III contains a core (composed of alpha, epsilon and theta chains) that associates with a tau subunit. This core dimerizes to form the POLIII' complex. PolIII' associates with the gamma complex (composed of gamma, delta, delta', psi and chi chains) and with the beta chain to form the complete DNA polymerase III complex.

The catalysed reaction is DNA(n) + a 2'-deoxyribonucleoside 5'-triphosphate = DNA(n+1) + diphosphate. Its function is as follows. DNA polymerase III is a complex, multichain enzyme responsible for most of the replicative synthesis in bacteria. This DNA polymerase also exhibits 3' to 5' exonuclease activity. This is DNA polymerase III subunit delta' (holB) from Pseudomonas aeruginosa (strain ATCC 15692 / DSM 22644 / CIP 104116 / JCM 14847 / LMG 12228 / 1C / PRS 101 / PAO1).